The following is a 334-amino-acid chain: YbbR-like domain-containing protein BB_0009 (334 aa).

The chain crosses the membrane as a helical span at residues 22–38 (AISILIAILMFVAFNFN). YbbR-like domains follow at residues 43-128 (ITTE…NVLL) and 138-220 (VKIE…VVNI).

Its subcellular location is the membrane. This Borreliella burgdorferi (strain ATCC 35210 / DSM 4680 / CIP 102532 / B31) (Borrelia burgdorferi) protein is YbbR-like domain-containing protein BB_0009.